The sequence spans 100 residues: Cytochrome bo(3) ubiquinol oxidase subunit 4 (100 aa).

Topologically, residues 1–9 (MLKNRYLKY) are cytoplasmic. Residues 10-32 (LFILILLSILSIMPIFAIIYRIF) traverse the membrane as a helical segment. The Extracellular segment spans residues 33 to 36 (SRNY). A helical membrane pass occupies residues 37–59 (LYAFIIVCLFFQILAHIKFFLNL). Topologically, residues 60–68 (DFSLEQRWK) are cytoplasmic. A helical membrane pass occupies residues 69–90 (LISVIFSLVVGLIILLGSIWVI). Residues 91–100 (KNLNNNLCIM) lie on the Extracellular side of the membrane.

This sequence belongs to the cytochrome c oxidase bacterial subunit 4 family. As to quaternary structure, heterooctamer of two A chains, two B chains, two C chains and two D chains.

It localises to the cell membrane. In terms of biological role, cytochrome bo(3) ubiquinol terminal oxidase is the component of the aerobic respiratory chain of E.coli that predominates when cells are grown at high aeration. Has proton pump activity across the membrane in addition to electron transfer, pumping 2 protons/electron. The chain is Cytochrome bo(3) ubiquinol oxidase subunit 4 (cyoD) from Buchnera aphidicola subsp. Baizongia pistaciae (strain Bp).